Here is a 127-residue protein sequence, read N- to C-terminus: Fluoride-specific ion channel FluC (127 aa).

Transmembrane regions (helical) follow at residues 4-24, 35-55, 71-91, and 103-123; these read LLLA…LLSM, LGTL…FAWF, TGFC…VFLL, and VFVN…LFSA. Gly75 and Thr78 together coordinate Na(+).

Belongs to the fluoride channel Fluc/FEX (TC 1.A.43) family.

It is found in the cell inner membrane. It catalyses the reaction fluoride(in) = fluoride(out). Na(+) is not transported, but it plays an essential structural role and its presence is essential for fluoride channel function. Fluoride-specific ion channel. Important for reducing fluoride concentration in the cell, thus reducing its toxicity. In Escherichia coli O7:K1 (strain IAI39 / ExPEC), this protein is Fluoride-specific ion channel FluC.